Here is a 103-residue protein sequence, read N- to C-terminus: ATP-dependent Clp protease adapter protein ClpS 1 (103 aa).

This sequence belongs to the ClpS family. In terms of assembly, binds to the N-terminal domain of the chaperone ClpA.

Its function is as follows. Involved in the modulation of the specificity of the ClpAP-mediated ATP-dependent protein degradation. This chain is ATP-dependent Clp protease adapter protein ClpS 1, found in Rhodopseudomonas palustris (strain ATCC BAA-98 / CGA009).